The following is a 283-amino-acid chain: 4-hydroxybenzoate octaprenyltransferase (283 aa).

The next 9 helical transmembrane spans lie at 16–36, 40–60, 85–105, 108–128, 135–155, 160–180, 204–224, 226–246, and 263–283; these read PIGT…AGAG, LRIV…GCVI, ISAT…FGLV, LNTE…LYPF, LPQI…FTAL, WFIA…YDTE, FDRL…GWIL, LITV…LFAY, and FLHN…HYWF.

Belongs to the UbiA prenyltransferase family. It depends on Mg(2+) as a cofactor.

It is found in the cell inner membrane. It catalyses the reaction all-trans-octaprenyl diphosphate + 4-hydroxybenzoate = 4-hydroxy-3-(all-trans-octaprenyl)benzoate + diphosphate. The protein operates within cofactor biosynthesis; ubiquinone biosynthesis. Its function is as follows. Catalyzes the prenylation of para-hydroxybenzoate (PHB) with an all-trans polyprenyl group. Mediates the second step in the final reaction sequence of ubiquinone-8 (UQ-8) biosynthesis, which is the condensation of the polyisoprenoid side chain with PHB, generating the first membrane-bound Q intermediate 3-octaprenyl-4-hydroxybenzoate. The protein is 4-hydroxybenzoate octaprenyltransferase of Idiomarina loihiensis (strain ATCC BAA-735 / DSM 15497 / L2-TR).